The chain runs to 230 residues: NAD-dependent protein deacylase 1 (230 aa).

Residues 1-226 (MESGIPTYRE…SHLSAFLSRE (226 aa)) enclose the Deacetylase sirtuin-type domain. 2 residues coordinate substrate: tyrosine 41 and arginine 44. 75-78 (QNID) contacts NAD(+). Histidine 93 acts as the Proton acceptor in catalysis. Zn(2+)-binding residues include cysteine 101, cysteine 104, cysteine 128, and cysteine 131. NAD(+) is bound by residues 168–170 (GTS), 194–196 (NTV), and alanine 212.

It belongs to the sirtuin family. Class III subfamily. Zn(2+) serves as cofactor.

The protein localises to the cytoplasm. It carries out the reaction N(6)-acetyl-L-lysyl-[protein] + NAD(+) + H2O = 2''-O-acetyl-ADP-D-ribose + nicotinamide + L-lysyl-[protein]. It catalyses the reaction N(6)-succinyl-L-lysyl-[protein] + NAD(+) + H2O = 2''-O-succinyl-ADP-D-ribose + nicotinamide + L-lysyl-[protein]. Its function is as follows. NAD-dependent lysine deacetylase and desuccinylase that specifically removes acetyl and succinyl groups on target proteins. Modulates the activities of several proteins which are inactive in their acylated form. In Pseudomonas syringae pv. tomato (strain ATCC BAA-871 / DC3000), this protein is NAD-dependent protein deacylase 1.